The following is a 240-amino-acid chain: Putative N-acetylmannosamine-6-phosphate 2-epimerase (240 aa).

The protein belongs to the NanE family.

The catalysed reaction is an N-acyl-D-glucosamine 6-phosphate = an N-acyl-D-mannosamine 6-phosphate. It participates in amino-sugar metabolism; N-acetylneuraminate degradation; D-fructose 6-phosphate from N-acetylneuraminate: step 3/5. Functionally, converts N-acetylmannosamine-6-phosphate (ManNAc-6-P) to N-acetylglucosamine-6-phosphate (GlcNAc-6-P). This is Putative N-acetylmannosamine-6-phosphate 2-epimerase from Vibrio cholerae serotype O1 (strain ATCC 39315 / El Tor Inaba N16961).